Consider the following 882-residue polypeptide: Alanine--tRNA ligase (882 aa).

4 residues coordinate Zn(2+): His570, His574, Cys672, and His676.

Belongs to the class-II aminoacyl-tRNA synthetase family. Zn(2+) serves as cofactor.

Its subcellular location is the cytoplasm. The catalysed reaction is tRNA(Ala) + L-alanine + ATP = L-alanyl-tRNA(Ala) + AMP + diphosphate. Catalyzes the attachment of alanine to tRNA(Ala) in a two-step reaction: alanine is first activated by ATP to form Ala-AMP and then transferred to the acceptor end of tRNA(Ala). Also edits incorrectly charged Ser-tRNA(Ala) and Gly-tRNA(Ala) via its editing domain. This is Alanine--tRNA ligase from Xanthomonas campestris pv. campestris (strain 8004).